Reading from the N-terminus, the 129-residue chain is GYLGGYAAPAYAGYAAPAYAGYAAPAYAAPVAAVAHAAPAVAVAHAPVPSSAANTYRISQTARLAYAAPAVAHAPLAYAAPAVAHAPLGYAAPAYGVARYAAAAPALGYGYGAYGYAAPALGYGHALVH.

Repeat copies occupy residues 7 to 10, 15 to 18, 23 to 26, 28 to 31, 37 to 40, 67 to 70, 79 to 82, 91 to 94, 103 to 106, and 117 to 120.

Functionally, component of the cuticle of migratory locust which contains more than 100 different structural proteins. In Locusta migratoria (Migratory locust), this protein is Cuticle protein 12.5.